Reading from the N-terminus, the 1104-residue chain is tRNA ligase 1 (1104 aa).

Catalysis depends on Lys152, which acts as the N6-AMP-lysine intermediate.

Belongs to the TRL1 family. Mg(2+) is required as a cofactor. As to expression, mainly expressed in proliferating cells and tissues such as root meristems, the vasculature of developing plantlets, flowers and elongating tissue.

It localises to the nucleus. Its subcellular location is the cytoplasm. It catalyses the reaction ATP + (ribonucleotide)n-3'-hydroxyl + 5'-phospho-(ribonucleotide)m = (ribonucleotide)n+m + AMP + diphosphate.. Its activity is regulated as follows. Requires the presence of NTP, preferentially ATP rather than dATP, UTP, CTP and GTP, respectively, to mediate ribonucleotide 5'-phosphorylation. Its function is as follows. Essential component of stress-response pathways entailing repair of RNA breaks with 2',3'-cyclic phosphate and 5'-OH ends. Tri-functional enzyme that repairs RNA breaks with 2',3'-cyclic-PO(4) and 5'-OH ends. The ligation activity requires three sequential enzymatic activities: opening of the 2'3'-cyclic phosphodiester bond of the 5' half-tRNA leaving a 2'-phosphomonoester (CPDase activity), phosphorylation of the 5' terminus of the 3' half-tRNA in the presence of ATP (kinase activity) and ligation of the two tRNA halves in an ATP-dependent reaction (ligase activity). Deficient in transferring AMP to pRNA(OH) to form AppRNA(OH) but proficient at sealing pre-adenylylated AppRNA(OH). CPDase and kinase reactions are almost insensitive to RNA length, whereas the ligase activity decreases with shorter RNA size. Can also splice DNA ended by a single 3'-terminal ribonucleoside 2',3'-cyclic-PO(4). Binds to mRNA, mature and immature. Exhibits tRNA ligase activity in vitro. Required for the splicing of precursor tRNA molecules containing introns. Can circularize an intron cleaved from a pre-tRNA by splicing endonuclease in vitro. Seems not involved in unfolded protein response (UPR) in the endoplasmic reticulum. Involved in auxin signaling and polar transport during organ morphogenesis. The protein is tRNA ligase 1 of Arabidopsis thaliana (Mouse-ear cress).